The following is a 385-amino-acid chain: Cytochrome b (385 aa).

The next 4 membrane-spanning stretches (helical) occupy residues 32 to 52 (FGAL…FLAM), 76 to 98 (WLIR…IHVF), 113 to 133 (LWNL…LGYV), and 179 to 199 (FFSL…IHVA). Positions 82 and 96 each coordinate heme b. The heme b site is built by H183 and H197. H202 serves as a coordination point for a ubiquinone. A run of 4 helical transmembrane segments spans residues 226-246 (FIFK…YAVF), 290-310 (LGGV…PFIT), 322-342 (SKTI…WIGF), and 349-369 (YLML…SLAV).

Belongs to the cytochrome b family. In terms of assembly, the main subunits of complex b-c1 are: cytochrome b, cytochrome c1 and the Rieske protein. Heme b serves as cofactor.

It localises to the mitochondrion inner membrane. Its function is as follows. Component of the ubiquinol-cytochrome c reductase complex (complex III or cytochrome b-c1 complex) that is part of the mitochondrial respiratory chain. The b-c1 complex mediates electron transfer from ubiquinol to cytochrome c. Contributes to the generation of a proton gradient across the mitochondrial membrane that is then used for ATP synthesis. This Acanthamoeba castellanii (Amoeba) protein is Cytochrome b (MT-CYB).